The chain runs to 260 residues: MSGRLIGKVALVSGGARGMGASHVRAMVAEGAKVVFGDILDEEGKAVAAELADAARYVHLDVTQPAQWTAAVDTAVTAFGGLHVLVNNAGILNIGTIEDYALTEWQRILDVNLTGVFLGIRAVVKPMKEAGRGSIINISSIEGLAGTVACHGYTATKFAVRGLTKSTALELGPSGIRVNSIHPGLVKTPMTDWVPEDIFQTALGRAAEPVEVSNLVVYLASDESSYSTGAEFVVDGGTVAGLAHNDFGAVEVSSQPEWVT.

11 residues coordinate NAD(+): Arg17, Met19, Asp38, Asp61, Val62, Asn88, Tyr153, Lys157, Val186, Thr188, and Thr191. Tyr153 (proton acceptor) is an active-site residue.

It belongs to the short-chain dehydrogenases/reductases (SDR) family. Homotetramer.

It catalyses the reaction androstan-3alpha,17beta-diol + NAD(+) = 17beta-hydroxyandrostanone + NADH + H(+). The protein operates within lipid metabolism; steroid degradation. Functionally, probably involved in steroid metabolism. The sequence is that of 3-alpha-(or 20-beta)-hydroxysteroid dehydrogenase (fabG3) from Mycobacterium bovis (strain ATCC BAA-935 / AF2122/97).